A 165-amino-acid chain; its full sequence is NADPH-dependent 7-cyano-7-deazaguanine reductase (165 aa).

The active-site Thioimide intermediate is the Cys-56. Asp-63 serves as the catalytic Proton donor. Substrate contacts are provided by residues 78-80 and 97-98; these read VES and HE.

Belongs to the GTP cyclohydrolase I family. QueF type 1 subfamily.

Its subcellular location is the cytoplasm. It carries out the reaction 7-aminomethyl-7-carbaguanine + 2 NADP(+) = 7-cyano-7-deazaguanine + 2 NADPH + 3 H(+). The protein operates within tRNA modification; tRNA-queuosine biosynthesis. In terms of biological role, catalyzes the NADPH-dependent reduction of 7-cyano-7-deazaguanine (preQ0) to 7-aminomethyl-7-deazaguanine (preQ1). The sequence is that of NADPH-dependent 7-cyano-7-deazaguanine reductase from Bacillus anthracis (strain A0248).